Reading from the N-terminus, the 312-residue chain is Malate dehydrogenase (312 aa).

NAD(+)-binding positions include 7–13 (GAAGGIG) and D34. Substrate-binding residues include R81 and R87. NAD(+)-binding positions include N94 and 117–119 (ITN). Substrate-binding residues include N119 and R153. H177 (proton acceptor) is an active-site residue. M227 is a binding site for NAD(+).

The protein belongs to the LDH/MDH superfamily. MDH type 1 family. Homodimer.

The catalysed reaction is (S)-malate + NAD(+) = oxaloacetate + NADH + H(+). Functionally, catalyzes the reversible oxidation of malate to oxaloacetate. This is Malate dehydrogenase from Photobacterium profundum (strain SS9).